Reading from the N-terminus, the 353-residue chain is Quinolinate synthase (353 aa).

Iminosuccinate is bound by residues His-49 and Ser-70. [4Fe-4S] cluster is bound at residue Cys-115. Iminosuccinate is bound by residues 141-143 and Ser-158; that span reads YAN. Cys-202 serves as a coordination point for [4Fe-4S] cluster. Iminosuccinate-binding positions include 228 to 230 and Thr-245; that span reads HPE. Position 299 (Cys-299) interacts with [4Fe-4S] cluster.

The protein belongs to the quinolinate synthase family. Type 1 subfamily. [4Fe-4S] cluster is required as a cofactor.

The protein localises to the cytoplasm. The catalysed reaction is iminosuccinate + dihydroxyacetone phosphate = quinolinate + phosphate + 2 H2O + H(+). The protein operates within cofactor biosynthesis; NAD(+) biosynthesis; quinolinate from iminoaspartate: step 1/1. Its function is as follows. Catalyzes the condensation of iminoaspartate with dihydroxyacetone phosphate to form quinolinate. The protein is Quinolinate synthase of Hahella chejuensis (strain KCTC 2396).